An 802-amino-acid chain; its full sequence is Protein SBE22 (802 aa).

Disordered stretches follow at residues 207-230 and 323-345; these read SSTI…RSNS and SGDP…QRHN.

It belongs to the SBE2 family.

The protein resides in the cytoplasm. It is found in the golgi apparatus. Its function is as follows. With SBE2, is involved in cell wall integrity and polarity processes like bud growth. The chain is Protein SBE22 (SBE22) from Vanderwaltozyma polyspora (strain ATCC 22028 / DSM 70294 / BCRC 21397 / CBS 2163 / NBRC 10782 / NRRL Y-8283 / UCD 57-17) (Kluyveromyces polysporus).